Here is a 152-residue protein sequence, read N- to C-terminus: Serglycin (152 aa).

A signal peptide spans 1–25; sequence MQVPVGSRLVLALAFVLVWGSSVQG. Residues 26–74 constitute a propeptide, activation peptide; it reads YPARRARYQWVRCKPNGFFANCIEEKGPQFDLIDESNNIGPPMNNPVLM. Cys-38 and Cys-47 form a disulfide bridge. Residues 66-115 are disordered; that stretch reads PPMNNPVLMEGPSKDFISNYDDYGSGSGSGSGSGSGSGSGSGSGFLGDME. A run of 10 repeats spans residues 89-90, 91-92, 93-94, 95-96, 97-98, 99-100, 101-102, 103-104, 105-106, and 107-108. Residues 89 to 108 are 10 X 2 AA tandem repeats of G-S; that stretch reads GSGSGSGSGSGSGSGSGSGS. A compositionally biased stretch (gly residues) spans 90–110; the sequence is SGSGSGSGSGSGSGSGSGSGF. Residues Ser-92 and Ser-94 are each glycosylated (O-linked (Xyl...) (glycosaminoglycan) serine). Residues Ser-98, Ser-100, Ser-102, Ser-104, Ser-106, and Ser-108 are each glycosylated (O-linked (Xyl...) (glycosaminoglycan) serine).

This sequence belongs to the serglycin family. Binds to activated CD44 and to GZMB. O-glycosylated; contains chondroitin sulfate and heparan sulfate.

Its subcellular location is the cytoplasmic granule. The protein localises to the cytolytic granule. The protein resides in the secreted. It is found in the extracellular space. It localises to the golgi apparatus. Its function is as follows. Plays a role in formation of mast cell secretory granules and mediates storage of various compounds in secretory vesicles. Required for storage of some proteases in both connective tissue and mucosal mast cells and for storage of granzyme B in T-lymphocytes. Plays a role in localizing neutrophil elastase in azurophil granules of neutrophils. Mediates processing of MMP2. Plays a role in cytotoxic cell granule-mediated apoptosis by forming a complex with granzyme B which is delivered to cells by perforin to induce apoptosis. Regulates the secretion of TNF-alpha and may also regulate protease secretion. Inhibits bone mineralization. The polypeptide is Serglycin (Srgn) (Mus musculus (Mouse)).